We begin with the raw amino-acid sequence, 147 residues long: Large ribosomal subunit protein bL9 (147 aa).

Belongs to the bacterial ribosomal protein bL9 family.

Functionally, binds to the 23S rRNA. The chain is Large ribosomal subunit protein bL9 from Geotalea daltonii (strain DSM 22248 / JCM 15807 / FRC-32) (Geobacter daltonii).